Reading from the N-terminus, the 644-residue chain is Transmembrane 9 superfamily member 9 (644 aa).

A signal peptide spans Met-1–Ser-27. At Phe-28–His-281 the chain is on the lumenal side. Residues Trp-282–Ile-302 form a helical membrane-spanning segment. Topologically, residues Met-303 to Gly-351 are cytoplasmic. A helical membrane pass occupies residues Thr-352 to Leu-372. The Lumenal portion of the chain corresponds to Ser-373 to Arg-377. Residues Gly-378–Ala-398 traverse the membrane as a helical segment. Topologically, residues Ser-399 to Thr-418 are cytoplasmic. Residues Ala-419–Gly-439 form a helical membrane-spanning segment. Over Gln-440–Met-451 the chain is Lumenal. The helical transmembrane segment at Phe-452 to Leu-472 threads the bilayer. Topologically, residues Gly-473–Pro-501 are cytoplasmic. A helical membrane pass occupies residues Ile-502–Phe-522. Topologically, residues Ile-523–Tyr-534 are lumenal. Residues Ile-535–Ile-555 traverse the membrane as a helical segment. At Val-556–Ser-573 the chain is on the cytoplasmic side. A helical transmembrane segment spans residues Tyr-574 to Thr-594. Residues Lys-595–Lys-600 lie on the Lumenal side of the membrane. The chain crosses the membrane as a helical span at residues Leu-601–Leu-621. Topologically, residues Thr-622–Asp-644 are cytoplasmic. Residues Phe-633–Tyr-638 carry the Endoplasmic reticulum export signal motif. Residues Lys-642–Asp-644 carry the Golgi retention signal motif.

This sequence belongs to the nonaspanin (TM9SF) (TC 9.A.2) family.

The protein localises to the endosome membrane. Its subcellular location is the golgi apparatus membrane. This chain is Transmembrane 9 superfamily member 9, found in Arabidopsis thaliana (Mouse-ear cress).